Here is a 271-residue protein sequence, read N- to C-terminus: MILVDISNSVTKIGLFKEGELRLLEKIPTAQISFEQTERIAQMYPLEDLILCSVVPQKNLFFEKPFLGRLYQIDPTVPLGIPIHYPNPREIGADRLANAVALSLLYGYPAVAIDFGTATTFDIVDQKGAFCGGIIAPGLSMMTSYLHEKTALLPLVEIKEPSKVIAQSTEEALRVGAVHGYRGMVQYLIEKIKEELGLLQKFIVVATGGGSRLVCSQLKSVDVIDEMLTLKGIRLIGEILIKRKRKDLPFPEGYPPMKGESFPFSLFTHNQ.

5–12 lines the ATP pocket; it reads DISNSVTK. Substrate contacts are provided by residues Tyr-85 and 92–95; that span reads GADR. The Proton acceptor role is filled by Asp-94. Asp-114 serves as a coordination point for K(+). An ATP-binding site is contributed by Thr-117. Thr-169 lines the substrate pocket.

This sequence belongs to the type III pantothenate kinase family. Homodimer. NH4(+) is required as a cofactor. K(+) serves as cofactor.

It localises to the cytoplasm. The catalysed reaction is (R)-pantothenate + ATP = (R)-4'-phosphopantothenate + ADP + H(+). Its pathway is cofactor biosynthesis; coenzyme A biosynthesis; CoA from (R)-pantothenate: step 1/5. Its function is as follows. Catalyzes the phosphorylation of pantothenate (Pan), the first step in CoA biosynthesis. The chain is Type III pantothenate kinase from Methylacidiphilum infernorum (isolate V4) (Methylokorus infernorum (strain V4)).